A 625-amino-acid chain; its full sequence is Alpha-amylase 1 (625 aa).

The signal sequence occupies residues 1–22; the sequence is MGFSKIALFSLFALFGLPTSLA. Cys-51 and Cys-59 are disulfide-bonded. Trp-105 serves as a coordination point for substrate. Asn-143 is a Ca(2+) binding site. N-linked (GlcNAc...) asparagine glycosylation is found at Asn-153, Asn-163, and Asn-180. A disulfide bridge links Cys-172 with Cys-187. Positions 185 and 198 each coordinate Ca(2+). Arg-227 lines the substrate pocket. Residue Asp-229 participates in Ca(2+) binding. Asp-229 acts as the Nucleophile in catalysis. A substrate-binding site is contributed by 232–233; sequence KQ. Residue Asn-241 is glycosylated (N-linked (GlcNAc...) asparagine). Glu-253 contributes to the Ca(2+) binding site. Glu-253 functions as the Proton donor in the catalytic mechanism. Asn-260 and Asn-286 each carry an N-linked (GlcNAc...) asparagine glycan. An intrachain disulfide couples Cys-263 to Cys-306. Asp-322 serves as a coordination point for substrate. N-linked (GlcNAc...) asparagine glycosylation is present at Asn-331. Residue Arg-370 coordinates substrate. Residues Asn-440 and Asn-461 are each glycosylated (N-linked (GlcNAc...) asparagine). The tract at residues 526 to 579 is disordered; sequence SATSSSKSSSSSSSRSGSSSSSSSRSGSTSSSGSSHTITSTSQSVHTSGSSTST. Ser-603 carries GPI-anchor amidated serine lipidation. The propeptide at 604-625 is removed in mature form; it reads SANAVRVSILGVAAFIAIVLFI.

Belongs to the glycosyl hydrolase 13 family. It depends on Ca(2+) as a cofactor.

It localises to the cell membrane. The enzyme catalyses Endohydrolysis of (1-&gt;4)-alpha-D-glucosidic linkages in polysaccharides containing three or more (1-&gt;4)-alpha-linked D-glucose units.. The sequence is that of Alpha-amylase 1 (aah1) from Schizosaccharomyces pombe (strain 972 / ATCC 24843) (Fission yeast).